Here is a 105-residue protein sequence, read N- to C-terminus: Large ribosomal subunit protein uL24 (105 aa).

The protein belongs to the universal ribosomal protein uL24 family. In terms of assembly, part of the 50S ribosomal subunit.

Functionally, one of two assembly initiator proteins, it binds directly to the 5'-end of the 23S rRNA, where it nucleates assembly of the 50S subunit. One of the proteins that surrounds the polypeptide exit tunnel on the outside of the subunit. The chain is Large ribosomal subunit protein uL24 from Xanthomonas campestris pv. campestris (strain 8004).